Reading from the N-terminus, the 261-residue chain is Tryptophan synthase alpha chain (261 aa).

Residues Glu-49 and Asp-60 each act as proton acceptor in the active site.

Belongs to the TrpA family. Tetramer of two alpha and two beta chains.

It catalyses the reaction (1S,2R)-1-C-(indol-3-yl)glycerol 3-phosphate + L-serine = D-glyceraldehyde 3-phosphate + L-tryptophan + H2O. Its pathway is amino-acid biosynthesis; L-tryptophan biosynthesis; L-tryptophan from chorismate: step 5/5. Its function is as follows. The alpha subunit is responsible for the aldol cleavage of indoleglycerol phosphate to indole and glyceraldehyde 3-phosphate. This is Tryptophan synthase alpha chain from Roseiflexus castenholzii (strain DSM 13941 / HLO8).